Here is a 351-residue protein sequence, read N- to C-terminus: MSAAVTISIDAMGGDAAPDMVVEGVRMAHERLPHVRYLMFGDASRIEPLLARFPEIRGVCTIHHTEESVSMEAKPSQVLRQGRKSSMWLAVEAVQKGEAAGIVSAGNTGALMAVSKFVLRMLPGIDRPAIAGMFPTVKGETLMLDLGANVDCNSNNLVEFAVMGEVYARAVLGLEKPSIGLLNVGSEDMKGNDAVKAAAAALRDSHLPISFYGFVEGNDICGGTVDVVVTDGFTGNIALKTAEGTVKLYSTFLKEGFQSSLLAKFGYLFARHAINKVKVRTDPRRYNGAMFLGLNGIAVKSHGGTDAFGFANAVGVAVELVTHGYNDRIRKEFDRLKPAEVSPSQLAAGTR.

The protein belongs to the PlsX family. As to quaternary structure, homodimer. Probably interacts with PlsY.

Its subcellular location is the cytoplasm. It carries out the reaction a fatty acyl-[ACP] + phosphate = an acyl phosphate + holo-[ACP]. Its pathway is lipid metabolism; phospholipid metabolism. In terms of biological role, catalyzes the reversible formation of acyl-phosphate (acyl-PO(4)) from acyl-[acyl-carrier-protein] (acyl-ACP). This enzyme utilizes acyl-ACP as fatty acyl donor, but not acyl-CoA. The polypeptide is Phosphate acyltransferase (Paramagnetospirillum magneticum (strain ATCC 700264 / AMB-1) (Magnetospirillum magneticum)).